We begin with the raw amino-acid sequence, 442 residues long: Chromosomal replication initiator protein DnaA (442 aa).

Positions Met-1–Gly-75 are domain I, interacts with DnaA modulators. Residues Gly-75–Gly-104 are domain II. The interval Asn-105 to Ala-322 is domain III, AAA+ region. ATP-binding residues include Gly-150, Gly-152, Lys-153, and Thr-154. The tract at residues Asn-323–Glu-442 is domain IV, binds dsDNA.

It belongs to the DnaA family. In terms of assembly, oligomerizes as a right-handed, spiral filament on DNA at oriC.

Its subcellular location is the cytoplasm. In terms of biological role, plays an essential role in the initiation and regulation of chromosomal replication. ATP-DnaA binds to the origin of replication (oriC) to initiate formation of the DNA replication initiation complex once per cell cycle. Binds the DnaA box (a 9 base pair repeat at the origin) and separates the double-stranded (ds)DNA. Forms a right-handed helical filament on oriC DNA; dsDNA binds to the exterior of the filament while single-stranded (ss)DNA is stabiized in the filament's interior. The ATP-DnaA-oriC complex binds and stabilizes one strand of the AT-rich DNA unwinding element (DUE), permitting loading of DNA polymerase. After initiation quickly degrades to an ADP-DnaA complex that is not apt for DNA replication. Binds acidic phospholipids. The polypeptide is Chromosomal replication initiator protein DnaA (Xanthomonas campestris pv. campestris (strain 8004)).